A 437-amino-acid chain; its full sequence is Glutamyl-tRNA reductase (437 aa).

Substrate-binding positions include 49–52 (TCNR), Ser109, 114–116 (EVQ), and Gln120. Cys50 acts as the Nucleophile in catalysis. NADP(+) is bound at residue 189–194 (GAGDTA).

The protein belongs to the glutamyl-tRNA reductase family. In terms of assembly, homodimer.

The catalysed reaction is (S)-4-amino-5-oxopentanoate + tRNA(Glu) + NADP(+) = L-glutamyl-tRNA(Glu) + NADPH + H(+). Its pathway is porphyrin-containing compound metabolism; protoporphyrin-IX biosynthesis; 5-aminolevulinate from L-glutamyl-tRNA(Glu): step 1/2. It participates in porphyrin-containing compound metabolism; chlorophyll biosynthesis. Catalyzes the NADPH-dependent reduction of glutamyl-tRNA(Glu) to glutamate 1-semialdehyde (GSA). This chain is Glutamyl-tRNA reductase, found in Chloroherpeton thalassium (strain ATCC 35110 / GB-78).